The chain runs to 104 residues: L-rhamnose mutarotase (104 aa).

Y18 serves as a coordination point for substrate. The active-site Proton donor is the H22. Substrate is bound by residues Y41 and 76–77; that span reads WW.

Belongs to the rhamnose mutarotase family. In terms of assembly, homodimer.

It localises to the cytoplasm. It catalyses the reaction alpha-L-rhamnose = beta-L-rhamnose. It functions in the pathway carbohydrate metabolism; L-rhamnose metabolism. Involved in the anomeric conversion of L-rhamnose. The protein is L-rhamnose mutarotase of Shigella flexneri serotype 5b (strain 8401).